The sequence spans 325 residues: DNA repair and recombination protein RadA (325 aa).

Residue 107-114 (GEFGSGKT) participates in ATP binding.

It belongs to the eukaryotic RecA-like protein family.

Functionally, involved in DNA repair and in homologous recombination. Binds and assemble on single-stranded DNA to form a nucleoprotein filament. Hydrolyzes ATP in a ssDNA-dependent manner and promotes DNA strand exchange between homologous DNA molecules. The polypeptide is DNA repair and recombination protein RadA (Methanosarcina barkeri (strain Fusaro / DSM 804)).